A 29-amino-acid polypeptide reads, in one-letter code: U1-pseudomyrmecitoxin-Pt1 subunit SS2 (29 aa).

The protein belongs to the myrmexin family. Heterodimer composed of subunit SS2 and subunit LS1 (U1-PSDTX-Pt1e), and heterodimer composed of subunit SS2 and LS2 (U1-PSDTX-Pt1c); disulfide-linked. In terms of tissue distribution, expressed by the venom gland.

It is found in the secreted. Its function is as follows. This heterodimer may have anti-inflammatory properties, since the myrmexin complex (composed of 6 SS-LS heterodimers) inhibits carrageenin-induced edema in a dose-dependent manner (after subcutaneous injection into rats). The polypeptide is U1-pseudomyrmecitoxin-Pt1 subunit SS2 (Pseudomyrmex triplarinus (Ant)).